Reading from the N-terminus, the 440-residue chain is Chromosome partition protein MukF (440 aa).

The tract at residues L208–I236 is leucine-zipper.

It belongs to the MukF family. In terms of assembly, interacts, and probably forms a ternary complex, with MukE and MukB via its C-terminal region. The complex formation is stimulated by calcium or magnesium. It is required for an interaction between MukE and MukB.

It localises to the cytoplasm. The protein localises to the nucleoid. Involved in chromosome condensation, segregation and cell cycle progression. May participate in facilitating chromosome segregation by condensation DNA from both sides of a centrally located replisome during cell division. Not required for mini-F plasmid partitioning. Probably acts via its interaction with MukB and MukE. Overexpression results in anucleate cells. It has a calcium binding activity. This Yersinia pestis protein is Chromosome partition protein MukF.